Here is a 284-residue protein sequence, read N- to C-terminus: ATP phosphoribosyltransferase (284 aa).

This sequence belongs to the ATP phosphoribosyltransferase family. Long subfamily. Equilibrium between an active dimeric form, an inactive hexameric form and higher aggregates. Interconversion between the various forms is largely reversible and is influenced by the natural substrates and inhibitors of the enzyme. Requires Mg(2+) as cofactor.

It is found in the cytoplasm. It carries out the reaction 1-(5-phospho-beta-D-ribosyl)-ATP + diphosphate = 5-phospho-alpha-D-ribose 1-diphosphate + ATP. It functions in the pathway amino-acid biosynthesis; L-histidine biosynthesis; L-histidine from 5-phospho-alpha-D-ribose 1-diphosphate: step 1/9. With respect to regulation, feedback inhibited by histidine. Catalyzes the condensation of ATP and 5-phosphoribose 1-diphosphate to form N'-(5'-phosphoribosyl)-ATP (PR-ATP). Has a crucial role in the pathway because the rate of histidine biosynthesis seems to be controlled primarily by regulation of HisG enzymatic activity. The sequence is that of ATP phosphoribosyltransferase (hisG) from Mycobacterium bovis (strain ATCC BAA-935 / AF2122/97).